A 231-amino-acid chain; its full sequence is Orotate phosphoribosyltransferase (231 aa).

Lysine 29 contacts 5-phospho-alpha-D-ribose 1-diphosphate. 37–38 (FF) lines the orotate pocket. Residues 75–76 (YK), arginine 107, lysine 108, lysine 111, histidine 113, and 133–141 (DDVISRCTA) contribute to the 5-phospho-alpha-D-ribose 1-diphosphate site. Serine 137 and arginine 165 together coordinate orotate.

Belongs to the purine/pyrimidine phosphoribosyltransferase family. PyrE subfamily. In terms of assembly, homodimer.

The catalysed reaction is orotidine 5'-phosphate + diphosphate = orotate + 5-phospho-alpha-D-ribose 1-diphosphate. The protein operates within pyrimidine metabolism; UMP biosynthesis via de novo pathway; UMP from orotate: step 1/2. Catalyzes the transfer of a ribosyl phosphate group from 5-phosphoribose 1-diphosphate to orotate, leading to the formation of orotidine monophosphate (OMP). This Podospora anserina (Pleurage anserina) protein is Orotate phosphoribosyltransferase (URA5).